The chain runs to 778 residues: Beta-phellandrene synthase (neryl-diphosphate-cyclizing), chloroplastic (778 aa).

A chloroplast-targeting transit peptide spans 1–36; the sequence is MIVGYRSTIITLSHPKLGNGKTISSNAIFQRSCRVR. Residues aspartate 531, asparagine 676, and glutamate 684 each contribute to the Mg(2+) site. The DDXXD motif signature appears at 531–535; that stretch reads DDHFE.

It belongs to the terpene synthase family. Tpse subfamily. The cofactor is Mg(2+). In terms of tissue distribution, trichomes.

The protein localises to the plastid. It localises to the chloroplast. It carries out the reaction neryl diphosphate = beta-phellandrene + diphosphate. Functionally, monoterpene synthase catalyzing the production of beta-phellandrene from neryl diphosphate. Also produces lower amounts of delta-2-carene, alpha-phellandrene and limonene. When incubated in vitro with geranyl diphosphate, catalyzes the formation of acyclic myrcene and ocimene as major products in addition to beta-phellandrene. The protein is Beta-phellandrene synthase (neryl-diphosphate-cyclizing), chloroplastic (PHS1) of Solanum lycopersicum (Tomato).